Reading from the N-terminus, the 296-residue chain is NAD kinase (296 aa).

Asp-73 (proton acceptor) is an active-site residue. NAD(+) contacts are provided by residues 73–74 (DG), Lys-78, 151–152 (NE), Arg-178, Asp-180, and 191–196 (TAHAMS).

This sequence belongs to the NAD kinase family. It depends on a divalent metal cation as a cofactor.

Its subcellular location is the cytoplasm. It catalyses the reaction NAD(+) + ATP = ADP + NADP(+) + H(+). In terms of biological role, involved in the regulation of the intracellular balance of NAD and NADP, and is a key enzyme in the biosynthesis of NADP. Catalyzes specifically the phosphorylation on 2'-hydroxyl of the adenosine moiety of NAD to yield NADP. In Francisella tularensis subsp. mediasiatica (strain FSC147), this protein is NAD kinase.